The primary structure comprises 307 residues: UDP-3-O-acyl-N-acetylglucosamine deacetylase (307 aa).

Zn(2+) contacts are provided by histidine 78, histidine 241, and aspartate 245. Catalysis depends on histidine 268, which acts as the Proton donor.

Belongs to the LpxC family. It depends on Zn(2+) as a cofactor.

It catalyses the reaction a UDP-3-O-[(3R)-3-hydroxyacyl]-N-acetyl-alpha-D-glucosamine + H2O = a UDP-3-O-[(3R)-3-hydroxyacyl]-alpha-D-glucosamine + acetate. It functions in the pathway glycolipid biosynthesis; lipid IV(A) biosynthesis; lipid IV(A) from (3R)-3-hydroxytetradecanoyl-[acyl-carrier-protein] and UDP-N-acetyl-alpha-D-glucosamine: step 2/6. Functionally, catalyzes the hydrolysis of UDP-3-O-myristoyl-N-acetylglucosamine to form UDP-3-O-myristoylglucosamine and acetate, the committed step in lipid A biosynthesis. The chain is UDP-3-O-acyl-N-acetylglucosamine deacetylase from Bordetella avium (strain 197N).